Reading from the N-terminus, the 126-residue chain is Ribonuclease P protein component (126 aa).

The protein belongs to the RnpA family. In terms of assembly, consists of a catalytic RNA component (M1 or rnpB) and a protein subunit.

The enzyme catalyses Endonucleolytic cleavage of RNA, removing 5'-extranucleotides from tRNA precursor.. Functionally, RNaseP catalyzes the removal of the 5'-leader sequence from pre-tRNA to produce the mature 5'-terminus. It can also cleave other RNA substrates such as 4.5S RNA. The protein component plays an auxiliary but essential role in vivo by binding to the 5'-leader sequence and broadening the substrate specificity of the ribozyme. The chain is Ribonuclease P protein component from Brevibacillus brevis (strain 47 / JCM 6285 / NBRC 100599).